The primary structure comprises 304 residues: Protoheme IX farnesyltransferase (304 aa).

7 helical membrane-spanning segments follow: residues 24–44 (VMTL…GTIH), 45–65 (PVIA…AAAL), 107–127 (VFVM…FSIF), 145–165 (IVIG…AVTG), 172–192 (VLLF…LALF), 234–254 (WIGG…LVFV), and 277–297 (LFGY…GDRL).

This sequence belongs to the UbiA prenyltransferase family. Protoheme IX farnesyltransferase subfamily.

It localises to the cell inner membrane. It catalyses the reaction heme b + (2E,6E)-farnesyl diphosphate + H2O = Fe(II)-heme o + diphosphate. It participates in porphyrin-containing compound metabolism; heme O biosynthesis; heme O from protoheme: step 1/1. In terms of biological role, converts heme B (protoheme IX) to heme O by substitution of the vinyl group on carbon 2 of heme B porphyrin ring with a hydroxyethyl farnesyl side group. This Novosphingobium aromaticivorans (strain ATCC 700278 / DSM 12444 / CCUG 56034 / CIP 105152 / NBRC 16084 / F199) protein is Protoheme IX farnesyltransferase.